Here is a 216-residue protein sequence, read N- to C-terminus: Leucyl/phenylalanyl-tRNA--protein transferase (216 aa).

The protein belongs to the L/F-transferase family.

The protein localises to the cytoplasm. The enzyme catalyses N-terminal L-lysyl-[protein] + L-leucyl-tRNA(Leu) = N-terminal L-leucyl-L-lysyl-[protein] + tRNA(Leu) + H(+). The catalysed reaction is N-terminal L-arginyl-[protein] + L-leucyl-tRNA(Leu) = N-terminal L-leucyl-L-arginyl-[protein] + tRNA(Leu) + H(+). It catalyses the reaction L-phenylalanyl-tRNA(Phe) + an N-terminal L-alpha-aminoacyl-[protein] = an N-terminal L-phenylalanyl-L-alpha-aminoacyl-[protein] + tRNA(Phe). Functionally, functions in the N-end rule pathway of protein degradation where it conjugates Leu, Phe and, less efficiently, Met from aminoacyl-tRNAs to the N-termini of proteins containing an N-terminal arginine or lysine. This Maricaulis maris (strain MCS10) (Caulobacter maris) protein is Leucyl/phenylalanyl-tRNA--protein transferase.